Here is a 250-residue protein sequence, read N- to C-terminus: Small ribosomal subunit protein uS3 (250 aa).

The KH type-2 domain maps to 39 to 107; sequence VRAALKKRLY…EVHLNIVEIR (69 aa). Residues 215–250 form a disordered region; sequence LDKRLATESGPAGEGGGRERGDRPDRGDRRDRRDRA. Residues 230–250 are compositionally biased toward basic and acidic residues; that stretch reads GGRERGDRPDRGDRRDRRDRA.

The protein belongs to the universal ribosomal protein uS3 family. As to quaternary structure, part of the 30S ribosomal subunit. Forms a tight complex with proteins S10 and S14.

Binds the lower part of the 30S subunit head. Binds mRNA in the 70S ribosome, positioning it for translation. This Caulobacter vibrioides (strain ATCC 19089 / CIP 103742 / CB 15) (Caulobacter crescentus) protein is Small ribosomal subunit protein uS3.